The chain runs to 322 residues: Probable ATP-dependent 6-phosphofructokinase (322 aa).

Residues Gly11, 72 to 73 (RF), and 102 to 105 (GDGS) each bind ATP. Mg(2+) is bound at residue Asp103. Substrate is bound by residues 125 to 127 (TID), 169 to 171 (MGR), Glu222, Lys249, and 255 to 258 (YLQR). Catalysis depends on Asp127, which acts as the Proton acceptor.

Belongs to the phosphofructokinase type A (PFKA) family. Homotetramer. Mg(2+) serves as cofactor.

It localises to the cytoplasm. The catalysed reaction is beta-D-fructose 6-phosphate + ATP = beta-D-fructose 1,6-bisphosphate + ADP + H(+). The protein operates within carbohydrate degradation; glycolysis; D-glyceraldehyde 3-phosphate and glycerone phosphate from D-glucose: step 3/4. In terms of biological role, catalyzes the phosphorylation of D-fructose 6-phosphate to fructose 1,6-bisphosphate by ATP, the first committing step of glycolysis. The sequence is that of Probable ATP-dependent 6-phosphofructokinase (pfkA) from Malacoplasma penetrans (strain HF-2) (Mycoplasma penetrans).